Reading from the N-terminus, the 132-residue chain is Fatty acid-binding protein, intestinal (132 aa).

Ala-2 bears the N-acetylalanine mark. The hexadecanoate site is built by Trp-83 and Arg-107. Tetradecanoate contacts are provided by Trp-83 and Arg-107.

Belongs to the calycin superfamily. Fatty-acid binding protein (FABP) family.

It is found in the cytoplasm. Functionally, FABPs are thought to play a role in the intracellular transport of long-chain fatty acids and their acyl-CoA esters. FABP2 is probably involved in triglyceride-rich lipoprotein synthesis. Binds saturated long-chain fatty acids with a high affinity, but binds with a lower affinity to unsaturated long-chain fatty acids. FABP2 may also help maintain energy homeostasis by functioning as a lipid sensor. The chain is Fatty acid-binding protein, intestinal (FABP2) from Bos taurus (Bovine).